A 254-amino-acid chain; its full sequence is uncharacterized protein (254 aa).

The tract at residues 60–161 is disordered; the sequence is PKSPTTTSIS…PEIPQAAPGT (102 aa). Low complexity-rich tracts occupy residues 63–77 and 89–146; these read PTTTSISTSTVSTTP and TPIP…TTTS.

This is an uncharacterized protein from Caenorhabditis elegans.